A 748-amino-acid polypeptide reads, in one-letter code: MQVMTKPITLAPAFIAEVKKEIKPHWGELGWVTYKRTYARWLPDAQRTENWDETVKRVVEGNINLDPRLHTANPDPKVVETLQKEARNLFKLIYGLAGTPSGRNLWISGTDYQKRNGDALNNCWFIAIRPQPYGQSHIVPEDYPASQPAVSMPYSFMFDELMKGGGVGFSVTKDNIAKLPPVATKLELTVVIGRNSASYADSLKMGAVDRDEWEKAHAGEQADHCALPDTREGWVLANAKVIDHHFAATNPSGQTKLVLDITNIRPKGARIHGFGGTASGPMPLIEMLLDINKLLNARVGQHLTAVDATDIGNLIGKTVVAGNVRRSAEMSLGSADDEDFITMKQDQKQLYHHRWASNNSVAINTQFDAYSPIALAIAKNGEPGIVNLELSRRFGRIADRENAENDPDVEGTNPCGEISLANGEPCNLFEVFPVVAVEQGWKLKQAFTLAARFAKRVTFSHYDWQVSRDIIKKNRRIGVSMSGIQDWFLNDFGRRVVSGFESVVDPQTGKMVQKPIYDPEIKQAVDGLYHTVVDADQAYSDALGCEPSRKHTTVKPSGTVAKLAGVSEGMHFHYAGYLIQRIRFQGNDPLLPALQACGYHIEPDVYTKGTMVVEFPIRAAHADDPAFASAGTVSIAEQIATQAFLQTYWSDNAVSCTVTFQPKEADQIAGLLSQYRHVIKSTSMLPYVGAGFKQAPKEPIDVKTYKQKCAAIHGSVAAVFAVQNADHDQKDLELVDQTDCAGGACPIK.

A disulfide bridge links cysteine 123 with cysteine 426. The tract at residues 151-162 (SMPYSFMFDELM) is effector region-1. Residues 172-320 (TKDNIAKLPP…IGNLIGKTVV (149 aa)) form an effector region-2 region. Residues cysteine 415 and glutamate 417 contribute to the active site. An adenosylcobalamin-binding-1 region spans residues 572-633 (FHYAGYLIQR…DPAFASAGTV (62 aa)). The segment at 692 to 733 (FKQAPKEPIDVKTYKQKCAAIHGSVAAVFAVQNADHDQKDLE) is adenosylcobalamin-binding-2.

The protein belongs to the class II ribonucleoside-triphosphate reductase family. Monomer. The cofactor is adenosylcob(III)alamin.

The catalysed reaction is a 2'-deoxyribonucleoside 5'-triphosphate + [thioredoxin]-disulfide + H2O = a ribonucleoside 5'-triphosphate + [thioredoxin]-dithiol. With respect to regulation, allosterically regulated by ATP and dNTP. This Lacticaseibacillus paracasei (strain ATCC 334 / BCRC 17002 / CCUG 31169 / CIP 107868 / KCTC 3260 / NRRL B-441) (Lactobacillus paracasei) protein is Adenosylcobalamin-dependent ribonucleoside-triphosphate reductase (rtpR).